The chain runs to 243 residues: MKSLPLLGILAFAANRLSAKHISHHYDVHIMGNYVDSLKKANPPSESNEMISKARYLNKVYFDICEPAYRDAGAIMTQERFKYIALVLNFLYEFCSAREYELAAVTATVLHNTSYLRIFEAPGSDKYKPRGIFQICTKKNYAILESIAFFYHDYVENPERVGTFSIHVLVDITCFWLHMSFAKKRRIDIYDVLSICNPSEYEILRNKSKYSREEVKKAEERFANRDEIYQKMLSIIYINYYRE.

The signal sequence occupies residues 1–19 (MKSLPLLGILAFAANRLSA). Asn112 and Asn206 each carry an N-linked (GlcNAc...) asparagine glycan.

This is an uncharacterized protein from Encephalitozoon cuniculi (strain GB-M1) (Microsporidian parasite).